The sequence spans 292 residues: ATP synthase gamma chain (292 aa).

This sequence belongs to the ATPase gamma chain family. In terms of assembly, F-type ATPases have 2 components, CF(1) - the catalytic core - and CF(0) - the membrane proton channel. CF(1) has five subunits: alpha(3), beta(3), gamma(1), delta(1), epsilon(1). CF(0) has three main subunits: a, b and c.

It is found in the cell membrane. Its function is as follows. Produces ATP from ADP in the presence of a proton gradient across the membrane. The gamma chain is believed to be important in regulating ATPase activity and the flow of protons through the CF(0) complex. This Streptococcus pneumoniae (strain JJA) protein is ATP synthase gamma chain.